We begin with the raw amino-acid sequence, 634 residues long: tRNA uridine 5-carboxymethylaminomethyl modification enzyme MnmG (634 aa).

14-19 (GGGHAG) serves as a coordination point for FAD. NAD(+) is bound at residue 279 to 293 (GPRYCPSIEDKVVRF).

The protein belongs to the MnmG family. In terms of assembly, homodimer. Heterotetramer of two MnmE and two MnmG subunits. The cofactor is FAD.

Its subcellular location is the cytoplasm. In terms of biological role, NAD-binding protein involved in the addition of a carboxymethylaminomethyl (cmnm) group at the wobble position (U34) of certain tRNAs, forming tRNA-cmnm(5)s(2)U34. The protein is tRNA uridine 5-carboxymethylaminomethyl modification enzyme MnmG of Xanthomonas campestris pv. campestris (strain B100).